Reading from the N-terminus, the 319-residue chain is MLKLDLKERDSLDLRCIAGHHGLANPITISDLNRPGLVLSGFFDFVAYRRIQLFGRGEHAYLLALLEQGRYGAIEKMFTFDLPCCIFSHGITPPEKFLHLAEPSSCPILVTRLTSSELSLRLMRVLSNIFAPTIALHGVLVEVYGVGILISGDSGVGKSETALELIERGHRLVADDLVEISCVNGNSLIGRGVHKSIGHHMEIRGLGIINITQLYGVGSIRERKEIQMVVQLEEWNSSKAYDRLGTQELNTTILDVSVPLIEIPVRPGRNIPIILETAAMNERLKRMGYFSAKEFNQSVLKLMEQNAAHAPYYRPDDTY.

Active-site residues include His137 and Lys158. 152-159 (GDSGVGKS) serves as a coordination point for ATP. Mg(2+) is bound at residue Ser159. Asp176 functions as the Proton acceptor; for phosphorylation activity. Proton donor; for dephosphorylation activity in the catalytic mechanism. The tract at residues 201 to 210 (MEIRGLGIIN) is important for the catalytic mechanism of both phosphorylation and dephosphorylation. Residue Glu202 participates in Mg(2+) binding. The active site involves Arg243. The segment at 264–269 (PVRPGR) is important for the catalytic mechanism of dephosphorylation.

It belongs to the HPrK/P family. In terms of assembly, homohexamer. Mg(2+) serves as cofactor.

It carries out the reaction [HPr protein]-L-serine + ATP = [HPr protein]-O-phospho-L-serine + ADP + H(+). The catalysed reaction is [HPr protein]-O-phospho-L-serine + phosphate + H(+) = [HPr protein]-L-serine + diphosphate. Catalyzes the ATP- as well as the pyrophosphate-dependent phosphorylation of a specific serine residue in HPr, a phosphocarrier protein of the phosphoenolpyruvate-dependent sugar phosphotransferase system (PTS). HprK/P also catalyzes the pyrophosphate-producing, inorganic phosphate-dependent dephosphorylation (phosphorolysis) of seryl-phosphorylated HPr (P-Ser-HPr). The chain is HPr kinase/phosphorylase (hprK) from Treponema pallidum (strain Nichols).